A 445-amino-acid polypeptide reads, in one-letter code: Phosphoglucosamine mutase (445 aa).

The active-site Phosphoserine intermediate is the Ser-102. Mg(2+) contacts are provided by Ser-102, Asp-241, Asp-243, and Asp-245. Position 102 is a phosphoserine (Ser-102).

The protein belongs to the phosphohexose mutase family. Requires Mg(2+) as cofactor. Activated by phosphorylation.

The catalysed reaction is alpha-D-glucosamine 1-phosphate = D-glucosamine 6-phosphate. Functionally, catalyzes the conversion of glucosamine-6-phosphate to glucosamine-1-phosphate. In Rhodococcus erythropolis (strain PR4 / NBRC 100887), this protein is Phosphoglucosamine mutase.